Consider the following 391-residue polypeptide: Immediate-early protein 2 (391 aa).

It belongs to the herpesviridae US22 family.

The protein resides in the host cytoplasm. Its subcellular location is the host nucleus. Functionally, involved in the reactivation of latent MCMV in spleen cells. This is Immediate-early protein 2 (IE2) from Murid herpesvirus 1 (strain Smith) (MuHV-1).